Reading from the N-terminus, the 453-residue chain is Carbamoyl phosphate synthase arginine-specific small chain (453 aa).

The transit peptide at 1 to 13 directs the protein to the mitochondrion; the sequence is MFSKLAANFAQRA. The Glutamine amidotransferase type-1 domain occupies 233–420; that stretch reads HVALIDCGVK…LENVRAAKSA (188 aa). Cys309 serves as the catalytic Nucleophile. Residues His393 and Glu395 contribute to the active site.

It belongs to the CarA family. In terms of assembly, heterodimer composed of 2 chains; the small (or glutamine) chain promotes the hydrolysis of glutamine to ammonia, which is used by the large (or ammonia) chain to synthesize carbamoyl phosphate.

It localises to the mitochondrion matrix. The catalysed reaction is hydrogencarbonate + L-glutamine + 2 ATP + H2O = carbamoyl phosphate + L-glutamate + 2 ADP + phosphate + 2 H(+). It catalyses the reaction L-glutamine + H2O = L-glutamate + NH4(+). The protein operates within amino-acid biosynthesis; L-arginine biosynthesis; carbamoyl phosphate from bicarbonate: step 1/1. Its function is as follows. Small subunit of the arginine-specific carbamoyl phosphate synthase (CPSase). CPSase catalyzes the formation of carbamoyl phosphate from the ammonia moiety of glutamine, carbonate, and phosphate donated by ATP, the first step of the arginine biosynthetic pathway. The small subunit (glutamine amidotransferase) binds and cleaves glutamine to supply the large subunit with the substrate ammonia. This chain is Carbamoyl phosphate synthase arginine-specific small chain (cpa1), found in Hypocrea virens (Gliocladium virens).